The following is a 336-amino-acid chain: MVKEYLKKISEGKHLTFDEAKEIVLSIDREEITEAQLGAVLLGLRLKGENPEEIAGFVDVLHEKAKKIPNRTPAVDVCGTGGDKSNTFNISTAVAFTLASLGVRVAKHGNRAMSSKAGSIDVIEALGFKCSDNPEEIARDIDEKGIGIIFAPYFHPVVGKAVKVRRELGIGTIFNMAGPMLNPANLSGQILGVYSEKVMRNMAEASLILKKDNILFYHGKDDGIDEISLSGKTIFAYLKNGKIDYFDFSPEDIGIKRYQKEEFKGGDAQENAKILEDIFKGVAKESHIDIVAVNSAFALWVLGKVKSVKEGFDMVKEHIMKGKVYEFVETLRGRTA.

5-phospho-alpha-D-ribose 1-diphosphate is bound by residues Gly-79, 82–83 (GD), Thr-87, 89–92 (NIST), 107–115 (KHGNRAMSS), and Ser-119. Residue Gly-79 coordinates anthranilate. Ser-91 is a Mg(2+) binding site. Asn-110 contributes to the anthranilate binding site. Arg-165 lines the anthranilate pocket. Residues Asp-225 and Glu-226 each contribute to the Mg(2+) site.

The protein belongs to the anthranilate phosphoribosyltransferase family. In terms of assembly, homodimer. Mg(2+) serves as cofactor.

It carries out the reaction N-(5-phospho-beta-D-ribosyl)anthranilate + diphosphate = 5-phospho-alpha-D-ribose 1-diphosphate + anthranilate. It functions in the pathway amino-acid biosynthesis; L-tryptophan biosynthesis; L-tryptophan from chorismate: step 2/5. Catalyzes the transfer of the phosphoribosyl group of 5-phosphorylribose-1-pyrophosphate (PRPP) to anthranilate to yield N-(5'-phosphoribosyl)-anthranilate (PRA). This chain is Anthranilate phosphoribosyltransferase, found in Dictyoglomus thermophilum (strain ATCC 35947 / DSM 3960 / H-6-12).